The following is a 406-amino-acid chain: Phosphopentomutase (406 aa).

Residues D10, D305, H310, D346, H347, and H358 each coordinate Mn(2+).

Belongs to the phosphopentomutase family. It depends on Mn(2+) as a cofactor.

It localises to the cytoplasm. The catalysed reaction is 2-deoxy-alpha-D-ribose 1-phosphate = 2-deoxy-D-ribose 5-phosphate. The enzyme catalyses alpha-D-ribose 1-phosphate = D-ribose 5-phosphate. It functions in the pathway carbohydrate degradation; 2-deoxy-D-ribose 1-phosphate degradation; D-glyceraldehyde 3-phosphate and acetaldehyde from 2-deoxy-alpha-D-ribose 1-phosphate: step 1/2. In terms of biological role, isomerase that catalyzes the conversion of deoxy-ribose 1-phosphate (dRib-1-P) and ribose 1-phosphate (Rib-1-P) to deoxy-ribose 5-phosphate (dRib-5-P) and ribose 5-phosphate (Rib-5-P), respectively. This chain is Phosphopentomutase, found in Methylorubrum extorquens (strain PA1) (Methylobacterium extorquens).